A 393-amino-acid chain; its full sequence is Phospho-N-acetylmuramoyl-pentapeptide-transferase (393 aa).

The next 10 helical transmembrane spans lie at 29–49 (RAVM…PIVI), 75–95 (TPTM…LLWF), 101–121 (FVWI…VDDW), 138–158 (YFWQ…SVSE), 193–213 (SISY…VIVG), 226–246 (GLAI…AYAT), 263–283 (AGEL…FLWF), 290–310 (VFMG…IAVI), 315–335 (VVLA…MAQV), and 370–390 (QVVV…LSSL).

It belongs to the glycosyltransferase 4 family. MraY subfamily. Mg(2+) is required as a cofactor.

The protein resides in the cell inner membrane. It carries out the reaction UDP-N-acetyl-alpha-D-muramoyl-L-alanyl-gamma-D-glutamyl-meso-2,6-diaminopimeloyl-D-alanyl-D-alanine + di-trans,octa-cis-undecaprenyl phosphate = di-trans,octa-cis-undecaprenyl diphospho-N-acetyl-alpha-D-muramoyl-L-alanyl-D-glutamyl-meso-2,6-diaminopimeloyl-D-alanyl-D-alanine + UMP. It functions in the pathway cell wall biogenesis; peptidoglycan biosynthesis. In terms of biological role, catalyzes the initial step of the lipid cycle reactions in the biosynthesis of the cell wall peptidoglycan: transfers peptidoglycan precursor phospho-MurNAc-pentapeptide from UDP-MurNAc-pentapeptide onto the lipid carrier undecaprenyl phosphate, yielding undecaprenyl-pyrophosphoryl-MurNAc-pentapeptide, known as lipid I. The protein is Phospho-N-acetylmuramoyl-pentapeptide-transferase of Methylibium petroleiphilum (strain ATCC BAA-1232 / LMG 22953 / PM1).